Here is a 43-residue protein sequence, read N- to C-terminus: Hemolysin H3C (43 aa).

Methionine 1 bears the N-formylmethionine mark.

The protein belongs to the staphylococcal hemolytic protein family.

The protein resides in the secreted. In terms of biological role, virulence factor. Causes hemolysis of erythrocytes from sheep (HD(50)=2.63 mM), rabbit (HD(50)=2.37 mM), guinea pig (HD(50)=1.98 mM), dog (HD(50)=1.02 mM) and human (HD(50)=2.07 mM). Acts synergistically with beta-hemolysins from S.aureus ATCC 25923. Cytotoxic towards human dermal fibroblasts. This chain is Hemolysin H3C, found in Staphylococcus cohnii subsp. cohnii.